The sequence spans 2813 residues: MIPARFAGVLLALALILPGTLCAEGTRGRSSTARCSLFGSDFVNTFDGSMYSFAGYCSYLLAGGCQKRSFSIIGDFQNGKRVSLSVYLGEFFDIHLFVNGTVTQGDQRVSMPYASKGLYLETEAGYYKLSGEAYGFVARIDGSGNFQVLLSDRYFNKTCGLCGNFNIFAEDDFMTQEGTLTSDPYDFANSWALSSGEQWCERASPPSSSCNISSGEMQKGLWEQCQLLKSTSVFARCHPLVDPEPFVALCEKTLCECAGGLECACPALLEYARTCAQEGMVLYGWTDHSACSPVCPAGMEYRQCVSPCARTCQSLHINEMCQERCVDGCSCPEGQLLDEGLCVESTECPCVHSGKRYPPGTSLSRDCNTCICRNSQWICSNEECPGECLVTGQSHFKSFDNRYFTFSGICQYLLARDCQDHSFSIVIETVQCADDRDAVCTRSVTVRLPGLHNSLVKLKHGAGVAMDGQDVQLPLLKGDLRIQHTVTASVRLSYGEDLQMDWDGRGRLLVKLSPVYAGKTCGLCGNYNGNQGDDFLTPSGLAEPRVEDFGNAWKLHGDCQDLQKQHSDPCALNPRMTRFSEEACAVLTSPTFEACHRAVSPLPYLRNCRYDVCSCSDGRECLCGALASYAAACAGRGVRVAWREPGRCELNCPKGQVYLQCGTPCNLTCRSLSYPDEECNEACLEGCFCPPGLYMDERGDCVPKAQCPCYYDGEIFQPEDIFSDHHTMCYCEDGFMHCTMSGVPGSLLPDAVLSSPLSHRSKRSLSCRPPMVKLVCPADNLRAEGLECTKTCQNYDLECMSMGCVSGCLCPPGMVRHENRCVALERCPCFHQGKEYAPGETVKIGCNTCVCQDRKWNCTDHVCDATCSTIGMAHYLTFDGLKYLFPGECQYVLVQDYCGSNPGTFRILVGNKGCSHPSVKCKKRVTILVEGGEIELFDGEVNVKRPMKDETHFEVVESGRYIILLLGKALSVVWDRHLSISVVLKQTYQEKVCGLCGNFDGIQNNDLTSSNLQVEEDPVDFGNSWKVSSQCADTRKVPLDSSPATCHNNIMKQTMVDSSCRILTSDVFQDCNKLVDPEPYLDVCIYDTCSCESIGDCACFCDTIAAYAHVCAQHGKVVTWRTATLCPQSCEERNLRENGYECEWRYNSCAPACQVTCQHPEPLACPVQCVEGCHAHCPPGKILDELLQTCVDPEDCPVCEVAGRRFASGKKVTLNPSDPEHCQICHCDVVNLTCEACQEPGGLVVPPTDAPVSPTTLYVEDISEPPLHDFYCSRLLDLVFLLDGSSRLSEAEFEVLKAFVVDMMERLRISQKWVRVAVVEYHDGSHAYIGLKDRKRPSELRRIASQVKYAGSQVASTSEVLKYTLFQIFSKIDRPEASRITLLLMASQEPQRMSRNFVRYVQGLKKKKVIVIPVGIGPHANLKQIRLIEKQAPENKAFVLSSVDELEQQRDEIVSYLCDLAPEAPPPTLPPDMAQVTVGPGLLGVSTLGPKRNSMVLDVAFVLEGSDKIGEADFNRSKEFMEEVIQRMDVGQDSIHVTVLQYSYMVTVEYPFSEAQSKGDILQRVREIRYQGGNRTNTGLALRYLSDHSFLVSQGDREQAPNLVYMVTGNPASDEIKRLPGDIQVVPIGVGPNANVQELERIGWPNAPILIQDFETLPREAPDLVLQRCCSGEGLQIPTLSPAPDCSQPLDVILLLDGSSSFPASYFDEMKSFAKAFISKANIGPRLTQVSVLQYGSITTIDVPWNVVPEKAHLLSLVDVMQREGGPSQIGDALGFAVRYLTSEMHGARPGASKAVVILVTDVSVDSVDAAADAARSNRVTVFPIGIGDRYDAAQLRILAGPAGDSNVVKLQRIEDLPTMVTLGNSFLHKLCSGFVRICMDEDGNEKRPGDVWTLPDQCHTVTCQPDGQTLLKSHRVNCDRGLRPSCPNSQSPVKVEETCGCRWTCPCVCTGSSTRHIVTFDGQNFKLTGSCSYVLFQNKEQDLEVILHNGACSPGARQGCMKSIEVKHSALSVELHSDMEVTVNGRLVSVPYVGGNMEVNVYGAIMHEVRFNHLGHIFTFTPQNNEFQLQLSPKTFASKTYGLCGICDENGANDFMLRDGTVTTDWKTLVQEWTVQRPGQTCQPILEEQCLVPDSSHCQVLLLPLFAECHKVLAPATFYAICQQDSCHQEQVCEVIASYAHLCRTNGVCVDWRTPDFCAMSCPPSLVYNHCEHGCPRHCDGNVSSCGDHPSEGCFCPPDKVMLEGSCVPEEACTQCIGEDGVQHQFLEAWVPDHQPCQICTCLSGRKVNCTTQPCPTAKAPTCGLCEVARLRQNADQCCPEYECVCDPVSCDLPPVPHCERGLQPTLTNPGECRPNFTCACRKEECKRVSPPSCPPHRLPTLRKTQCCDEYECACNCVNSTVSCPLGYLASTATNDCGCTTTTCLPDKVCVHRSTIYPVGQFWEEGCDVCTCTDMEDAVMGLRVAQCSQKPCEDSCRSGFTYVLHEGECCGRCLPSACEVVTGSPRGDSQSSWKSVGSQWASPENPCLINECVRVKEEVFIQQRNVSCPQLEVPVCPSGFQLSCKTSACCPSCRCERMEACMLNGTVIGPGKTVMIDVCTTCRCMVQVGVISGFKLECRKTTCNPCPLGYKEENNTGECCGRCLPTACTIQLRGGQIMTLKRDETLQDGCDTHFCKVNERGEYFWEKRVTGCPPFDEHKCLAEGGKIMKIPGTCCDTCEEPECNDITARLQYVKVGSCKSEVEVDIHYCQGKCASKAMYSIDINDVQDQCSCCSPTRTEPMQVALHCTNGSVVYHEVLNAMECKCSPRKCSK.

A signal peptide spans 1-22 (MIPARFAGVLLALALILPGTLC). Positions 33–201 (ARCSLFGSDF…ALSSGEQWCE (169 aa)) constitute a VWFD 1 domain. Cystine bridges form between Cys35/Cys162 and Cys57/Cys200. 3 N-linked (GlcNAc...) asparagine glycosylation sites follow: Asn99, Asn156, and Asn211. One can recognise a TIL 1 domain in the interval 295–348 (CPAGMEYRQCVSPCARTCQSLHINEMCQERCVDGCSCPEGQLLDEGLCVESTEC). The VWFD 2 domain occupies 386 to 560 (GECLVTGQSH…NAWKLHGDCQ (175 aa)). Cystine bridges form between Cys388–Cys524, Cys410–Cys559, and Cys432–Cys440. 2 consecutive TIL domains span residues 652–707 (CPKG…KAQC) and 776–827 (CPAD…LERC). N-linked (GlcNAc...) asparagine glycosylation occurs at Asn666. Residues 764 to 787 (SLSCRPPMVKLVCPADNLRAEGLE) form an amino-terminal region. 3 disulfides stabilise this stretch: Cys767–Cys808, Cys776–Cys804, and Cys810–Cys821. Positions 788–833 (CTKTCQNYDLECMSMGCVSGCLCPPGMVRHENRCVALERCPCFHQG) are E1. Residues 826-853 (RCPCFHQGKEYAPGETVKIGCNTCVCQD) are CX. N-linked (GlcNAc...) asparagine glycosylation is present at Asn857. Positions 865-1032 (ATCSTIGMAH…NSWKVSSQCA (168 aa)) constitute a VWFD 3 domain. Cystine bridges form between Cys867-Cys996, Cys889-Cys1031, Cys898-Cys993, Cys914-Cys921, Cys1060-Cys1084, Cys1071-Cys1111, Cys1089-Cys1091, and Cys1126-Cys1130. In terms of domain architecture, TIL 4 spans 1146–1196 (YNSCAPACQVTCQHPEPLACPVQCVEGCHAHCPPGKILDELLQTCVDPEDC). A glycan (N-linked (GlcNAc...) asparagine; atypical) is linked at Asn1147. 3 cysteine pairs are disulfide-bonded: Cys1149/Cys1169, Cys1153/Cys1165, and Cys1196/Cys1199. An N-linked (GlcNAc...) asparagine glycan is attached at Asn1231. Cys1234 and Cys1237 are disulfide-bonded. 3 O-linked (GalNAc...) threonine glycosylation sites follow: Thr1248, Thr1255, and Thr1256. Ser1263 carries O-linked (GalNAc...) serine glycosylation. A disulfide bridge links Cys1272 with Cys1458. A VWFA 1; binding site for platelet glycoprotein Ib domain is found at 1277–1453 (DLVFLLDGSS…DELEQQRDEI (177 aa)). 2 O-linked (GalNAc...) threonine glycosylation sites follow: Thr1468 and Thr1477. Ser1486 is a glycosylation site (O-linked (GalNAc...) serine). Thr1487 is a glycosylation site (O-linked (GalNAc...) threonine). The VWFA 2 domain occupies 1498–1665 (DVAFVLEGSD…TLPREAPDLV (168 aa)). The N-linked (GlcNAc...) (complex) asparagine glycan is linked to Asn1515. N-linked (GlcNAc...) asparagine glycosylation occurs at Asn1574. Cysteines 1669 and 1670 form a disulfide. O-linked (GalNAc...) threonine glycosylation is present at Thr1679. 7 disulfides stabilise this stretch: Cys1686–Cys1872, Cys1879–Cys1904, Cys1899–Cys1940, Cys1927–Cys2088, Cys1950–Cys2085, Cys1972–Cys2123, and Cys1993–Cys2001. The VWFA 3; main binding site for collagens type I and III domain occupies 1691-1871 (DVILLLDGSS…TLGNSFLHKL (181 aa)). In terms of domain architecture, VWFD 4 spans 1948 to 2124 (CVCTGSSTRH…TVQRPGQTCQ (177 aa)). The segment at 2216–2261 (CPRHCDGNVSSCGDHPSEGCFCPPDKVMLEGSCVPEEACTQCIGED) is E2. N-linked (GlcNAc...) asparagine glycans are attached at residues Asn2223 and Asn2290. Residues 2255–2328 (TQCIGEDGVQ…CCPEYECVCD (74 aa)) enclose the VWFC 1 domain. Thr2298 carries an O-linked (GalNAc...) threonine glycan. N-linked (GlcNAc...) asparagine glycosylation is found at Asn2357 and Asn2400. In terms of domain architecture, VWFC 2 spans 2429 to 2495 (KVCVHRSTIY…HEGECCGRCL (67 aa)). The Cell attachment site signature appears at 2507 to 2509 (RGD). Residues Asn2546 and Asn2585 are each glycosylated (N-linked (GlcNAc...) asparagine). Residues 2580 to 2645 (EACMLNGTVI…NTGECCGRCL (66 aa)) form the VWFC 3 domain. 4 disulfides stabilise this stretch: Cys2724-Cys2774, Cys2739-Cys2788, Cys2750-Cys2804, and Cys2754-Cys2806. The region spanning 2724-2812 (CNDITARLQY…ECKCSPRKCS (89 aa)) is the CTCK domain. The N-linked (GlcNAc...) asparagine glycan is linked to Asn2790.

In terms of assembly, multimeric. Interacts with F8. Post-translationally, all cysteine residues are involved in intrachain or interchain disulfide bonds. N- and O-glycosylated. Plasma.

Its subcellular location is the secreted. It is found in the extracellular space. It localises to the extracellular matrix. Its function is as follows. Important in the maintenance of hemostasis, it promotes adhesion of platelets to the sites of vascular injury by forming a molecular bridge between sub-endothelial collagen matrix and platelet-surface receptor complex GPIb-IX-V. Also acts as a chaperone for coagulation factor VIII, delivering it to the site of injury, stabilizing its heterodimeric structure and protecting it from premature clearance from plasma. This is von Willebrand factor (VWF) from Homo sapiens (Human).